Here is a 327-residue protein sequence, read N- to C-terminus: Lipoyl synthase (327 aa).

Residues cysteine 66, cysteine 71, cysteine 77, cysteine 92, cysteine 96, cysteine 99, and serine 306 each contribute to the [4Fe-4S] cluster site. One can recognise a Radical SAM core domain in the interval 78 to 295 (FSKGTATFMI…EKEAYELGFT (218 aa)).

This sequence belongs to the radical SAM superfamily. Lipoyl synthase family. [4Fe-4S] cluster serves as cofactor.

The protein resides in the cytoplasm. It catalyses the reaction [[Fe-S] cluster scaffold protein carrying a second [4Fe-4S](2+) cluster] + N(6)-octanoyl-L-lysyl-[protein] + 2 oxidized [2Fe-2S]-[ferredoxin] + 2 S-adenosyl-L-methionine + 4 H(+) = [[Fe-S] cluster scaffold protein] + N(6)-[(R)-dihydrolipoyl]-L-lysyl-[protein] + 4 Fe(3+) + 2 hydrogen sulfide + 2 5'-deoxyadenosine + 2 L-methionine + 2 reduced [2Fe-2S]-[ferredoxin]. Its pathway is protein modification; protein lipoylation via endogenous pathway; protein N(6)-(lipoyl)lysine from octanoyl-[acyl-carrier-protein]: step 2/2. Its function is as follows. Catalyzes the radical-mediated insertion of two sulfur atoms into the C-6 and C-8 positions of the octanoyl moiety bound to the lipoyl domains of lipoate-dependent enzymes, thereby converting the octanoylated domains into lipoylated derivatives. The polypeptide is Lipoyl synthase (Neisseria gonorrhoeae (strain ATCC 700825 / FA 1090)).